The following is a 241-amino-acid chain: MKVLIKDNYDELSEVAALEILELIDKKPDCVLGLATGSTPVGTYQKLIEYYKKGKVDFSKVTSFNLDEYRGLNGEHPQSYKFFMNNTLFNHINIDKKNTFILDGLSNDIEKECIEYDKKIDNKGGIDLQILGIGGNGHIGFNEPSEELSISTHLTKLKTKTIKDNSRFFNSEEEVPTEAITMGIGSIMKARKIILLINGEVKAEIVKKLINGNVSTKVPASLLHLHPNCTVILDKEAAKFI.

Catalysis depends on Asp-67, which acts as the Proton acceptor; for enolization step. The active-site For ring-opening step is the Asn-136. His-138 acts as the Proton acceptor; for ring-opening step in catalysis. Glu-143 (for ring-opening step) is an active-site residue.

It belongs to the glucosamine/galactosamine-6-phosphate isomerase family. NagB subfamily.

The catalysed reaction is alpha-D-glucosamine 6-phosphate + H2O = beta-D-fructose 6-phosphate + NH4(+). The protein operates within amino-sugar metabolism; N-acetylneuraminate degradation; D-fructose 6-phosphate from N-acetylneuraminate: step 5/5. Functionally, catalyzes the reversible isomerization-deamination of glucosamine 6-phosphate (GlcN6P) to form fructose 6-phosphate (Fru6P) and ammonium ion. In Clostridium tetani (strain Massachusetts / E88), this protein is Glucosamine-6-phosphate deaminase.